The following is a 548-amino-acid chain: Probable bifunctional tRNA threonylcarbamoyladenosine biosynthesis protein (548 aa).

The tract at residues 1–338 (MRILGIEGTA…FRPDEVAVTW (338 aa)) is kae1. 2 residues coordinate Fe cation: histidine 122 and histidine 126. L-threonylcarbamoyladenylate is bound by residues 143 to 147 (NASGA), aspartate 175, glycine 188, glutamate 192, and asparagine 271. A Fe cation-binding site is contributed by aspartate 299. Residues 349 to 548 (RMGGDEVQGA…DDIEGRGRYQ (200 aa)) form the Protein kinase domain. Residues 355–362 (VQGAEATV) and lysine 371 each bind ATP. A compositionally biased stretch (basic and acidic residues) spans 390 to 404 (ERTRQEARLTSEARR). Positions 390–413 (ERTRQEARLTSEARRNGVPTPLVR) are disordered. Aspartate 460 serves as the catalytic Proton acceptor; for kinase activity.

This sequence in the N-terminal section; belongs to the KAE1 / TsaD family. In the C-terminal section; belongs to the protein kinase superfamily. Tyr protein kinase family. BUD32 subfamily. In terms of assembly, component of the KEOPS complex that consists of Kae1, Bud32, Cgi121 and Pcc1; the whole complex dimerizes. It depends on Fe(2+) as a cofactor.

The protein localises to the cytoplasm. The enzyme catalyses L-seryl-[protein] + ATP = O-phospho-L-seryl-[protein] + ADP + H(+). The catalysed reaction is L-threonyl-[protein] + ATP = O-phospho-L-threonyl-[protein] + ADP + H(+). It catalyses the reaction L-threonylcarbamoyladenylate + adenosine(37) in tRNA = N(6)-L-threonylcarbamoyladenosine(37) in tRNA + AMP + H(+). Its function is as follows. Required for the formation of a threonylcarbamoyl group on adenosine at position 37 (t(6)A37) in tRNAs that read codons beginning with adenine. Is a component of the KEOPS complex that is probably involved in the transfer of the threonylcarbamoyl moiety of threonylcarbamoyl-AMP (TC-AMP) to the N6 group of A37. The Kae1 domain likely plays a direct catalytic role in this reaction. The Bud32 domain probably displays kinase activity that regulates Kae1 function. The protein is Probable bifunctional tRNA threonylcarbamoyladenosine biosynthesis protein of Haloarcula marismortui (strain ATCC 43049 / DSM 3752 / JCM 8966 / VKM B-1809) (Halobacterium marismortui).